The sequence spans 145 residues: 3-dehydroquinate dehydratase (145 aa).

The active-site Proton acceptor is the Tyr24. 3 residues coordinate substrate: Asn75, His81, and Asp88. His101 serves as the catalytic Proton donor. Residues 102 to 103 (IS) and Arg112 contribute to the substrate site.

Belongs to the type-II 3-dehydroquinase family. Homododecamer.

It catalyses the reaction 3-dehydroquinate = 3-dehydroshikimate + H2O. The protein operates within metabolic intermediate biosynthesis; chorismate biosynthesis; chorismate from D-erythrose 4-phosphate and phosphoenolpyruvate: step 3/7. In terms of biological role, catalyzes a trans-dehydration via an enolate intermediate. In Corynebacterium glutamicum (strain R), this protein is 3-dehydroquinate dehydratase.